The following is a 375-amino-acid chain: ORC1-type DNA replication protein 3 (375 aa).

Residues 66–70 (TGKTT), Y209, and R221 contribute to the ATP site.

It belongs to the CDC6/cdc18 family.

Its function is as follows. Involved in regulation of DNA replication. This is ORC1-type DNA replication protein 3 (cdc6c) from Haloarcula marismortui (strain ATCC 43049 / DSM 3752 / JCM 8966 / VKM B-1809) (Halobacterium marismortui).